The following is a 236-amino-acid chain: 2-C-methyl-D-erythritol 4-phosphate cytidylyltransferase (236 aa).

This sequence belongs to the IspD/TarI cytidylyltransferase family. IspD subfamily.

It carries out the reaction 2-C-methyl-D-erythritol 4-phosphate + CTP + H(+) = 4-CDP-2-C-methyl-D-erythritol + diphosphate. It participates in isoprenoid biosynthesis; isopentenyl diphosphate biosynthesis via DXP pathway; isopentenyl diphosphate from 1-deoxy-D-xylulose 5-phosphate: step 2/6. Catalyzes the formation of 4-diphosphocytidyl-2-C-methyl-D-erythritol from CTP and 2-C-methyl-D-erythritol 4-phosphate (MEP). The chain is 2-C-methyl-D-erythritol 4-phosphate cytidylyltransferase from Alkaliphilus oremlandii (strain OhILAs) (Clostridium oremlandii (strain OhILAs)).